The following is a 134-amino-acid chain: Small ribosomal subunit protein uS8c (134 aa).

It belongs to the universal ribosomal protein uS8 family. Part of the 30S ribosomal subunit.

Its subcellular location is the plastid. In terms of biological role, one of the primary rRNA binding proteins, it binds directly to 16S rRNA central domain where it helps coordinate assembly of the platform of the 30S subunit. In Cuscuta obtusiflora (Peruvian dodder), this protein is Small ribosomal subunit protein uS8c (rps8).